The primary structure comprises 411 residues: MLLKTVLLLGHVAQVLMLDNGLLQTPPMGWLAWERFRCNINCDEDPKNCISEQLFMEMADRMAQDGWRDMGYTYLNIDDCWIGGRDASGRLMPDPKRFPHGIPFLADYVHSLGLKLGIYADMGNFTCMGYPGTTLDKVVQDAQTFAEWKVDMLKLDGCFSTPEERAQGYPKMAAALNATGRPIAFSCSWPAYEGGLPPRVNYSLLADICNLWRNYDDIQDSWWSVLSILNWFVEHQDILQPVAGPGHWNDPDMLLIGNFGLSLEQSRAQMALWTVLAAPLLMSTDLRTISAQNMDILQNPLMIKINQDPLGIQGRRIHKEKSLIEVYMRPLSNKASALVFFSCRTDMPYRYHSSLGQLNFTGSVIYEAQDVYSGDIISGLRDETNFTVIINPSGVVMWYLYPIKNLEMSQQ.

The first 17 residues, 1-17 (MLLKTVLLLGHVAQVLM), serve as a signal peptide directing secretion. Disulfide bonds link C38–C80 and C42–C49. 78–79 (DD) provides a ligand contact to substrate. An N-linked (GlcNAc...) asparagine glycan is attached at N124. A disulfide bridge links C127 with C158. K154 contacts substrate. The active-site Nucleophile is D156. An N-linked (GlcNAc...) asparagine glycan is attached at N177. Residues C187 and C209 are joined by a disulfide bond. Position 188 (S188) interacts with substrate. N-linked (GlcNAc...) asparagine glycosylation occurs at N201. The substrate site is built by R213 and D217. The active-site Proton donor is the D217. Phosphoserine occurs at positions 322 and 332. 2 N-linked (GlcNAc...) asparagine glycosylation sites follow: N359 and N385.

The protein belongs to the glycosyl hydrolase 27 family. As to quaternary structure, homodimer.

The protein resides in the lysosome. The catalysed reaction is Cleavage of non-reducing alpha-(1-&gt;3)-N-acetylgalactosamine residues from human blood group A and AB mucin glycoproteins, Forssman hapten and blood group A lacto series glycolipids.. It catalyses the reaction a neolactoside IV(3)-alpha-GalNAc,IV(2)-alpha-Fuc-nLc4Cer(d18:1(4E)) + H2O = a neolactoside IV(2)-alpha-Fuc-nLc4Cer(d18:1(4E)) + N-acetyl-alpha-D-galactosamine. The enzyme catalyses a neolactoside IV(3)-alpha-GalNAc,IV(2)-alpha-Fuc-nLc4Cer(d18:0) + H2O = a neolactoside IV(2)-alpha-Fuc-nLc4Cer(d18:0) + N-acetyl-alpha-D-galactosamine. It carries out the reaction a globoside IV3GalNAc-Gb4Cer + H2O = N-acetyl-alpha-D-galactosamine + a globoside Gb4Cer. Functionally, removes terminal alpha-N-acetylgalactosamine residues from glycolipids and glycopeptides. Required for the breakdown of glycolipids. This Homo sapiens (Human) protein is Alpha-N-acetylgalactosaminidase.